The sequence spans 164 residues: Nucleotide-binding protein Acid345_2028 (164 aa).

The protein belongs to the YajQ family.

Nucleotide-binding protein. The sequence is that of Nucleotide-binding protein Acid345_2028 from Koribacter versatilis (strain Ellin345).